A 355-amino-acid chain; its full sequence is uncharacterized protein (355 aa).

The active-site For GATase activity is C2. The 247-residue stretch at 2 to 248 (CELLGICFNK…NGELMVFKNG (247 aa)) folds into the Glutamine amidotransferase type-2 domain.

This is an uncharacterized protein from Methanocaldococcus jannaschii (strain ATCC 43067 / DSM 2661 / JAL-1 / JCM 10045 / NBRC 100440) (Methanococcus jannaschii).